Here is a 190-residue protein sequence, read N- to C-terminus: MSNVLRPALSLIVLMSLITGVAYPLVVTGVAQVAFPAQANGSLVYDAAGKVRGSALIAQSFTGDEWFQSRPSAGAFATVASGASNFAPSNPALVTRVKEDVAKLANASQEPVPLALLTTSGSGLDPHLSPEAIAWQAGRVAAARQLPLEKVQALIDANTQRPLIGPPVVNVLALNMSLNQLPSAPRNAQL.

Residues 11–31 (LIVLMSLITGVAYPLVVTGVA) form a helical membrane-spanning segment.

The protein belongs to the KdpC family. As to quaternary structure, the system is composed of three essential subunits: KdpA, KdpB and KdpC.

The protein localises to the cell inner membrane. Its function is as follows. Part of the high-affinity ATP-driven potassium transport (or Kdp) system, which catalyzes the hydrolysis of ATP coupled with the electrogenic transport of potassium into the cytoplasm. This subunit acts as a catalytic chaperone that increases the ATP-binding affinity of the ATP-hydrolyzing subunit KdpB by the formation of a transient KdpB/KdpC/ATP ternary complex. The protein is Potassium-transporting ATPase KdpC subunit of Pseudomonas savastanoi pv. phaseolicola (strain 1448A / Race 6) (Pseudomonas syringae pv. phaseolicola (strain 1448A / Race 6)).